The sequence spans 360 residues: Probable mannan endo-1,4-beta-mannosidase A (360 aa).

Residues 1–18 (MKLSQILTFASLLSGALA) form the signal peptide. Substrate is bound by residues Asn142 and Asn178. The Proton donor role is filled by Glu179. A substrate-binding site is contributed by Tyr254. Catalysis depends on Glu287, which acts as the Nucleophile. Asn307 carries N-linked (GlcNAc...) asparagine glycosylation. Trp317 lines the substrate pocket.

It belongs to the glycosyl hydrolase 5 (cellulase A) family.

Its subcellular location is the secreted. It carries out the reaction Random hydrolysis of (1-&gt;4)-beta-D-mannosidic linkages in mannans, galactomannans and glucomannans.. Its function is as follows. Endo-1,4-mannanase, a crucial enzyme for depolymerization of seed galactomannans and wood galactoglucomannans. This chain is Probable mannan endo-1,4-beta-mannosidase A (manA), found in Aspergillus clavatus (strain ATCC 1007 / CBS 513.65 / DSM 816 / NCTC 3887 / NRRL 1 / QM 1276 / 107).